The sequence spans 125 residues: Type-4 ice-structuring protein (125 aa).

The first 20 residues, 1–20 (MKYTLIAAIVVLALAQGTLA), serve as a signal peptide directing secretion.

It belongs to the apolipoprotein A1/A4/E family.

It is found in the secreted. Antifreeze proteins lower the blood freezing point. In Gadus morhua (Atlantic cod), this protein is Type-4 ice-structuring protein.